We begin with the raw amino-acid sequence, 384 residues long: Ceramide synthase 6 (384 aa).

The Lumenal portion of the chain corresponds to 1-34; that stretch reads MAGILAWFWNERFWLPHNVTWADLKNTEEATFPQ. An N-linked (GlcNAc...) asparagine glycan is attached at Asn-18. A helical transmembrane segment spans residues 35 to 55; it reads AEDLYLAFPLAFCIFMVRLIF. The segment at 66-127 is homeobox-like; the sequence is ALNIQANGPQ…RQRRNQEKPS (62 aa). One can recognise a TLC domain in the interval 130–331; that stretch reads TRFCESMWRF…IVKIACKTVS (202 aa). The next 4 membrane-spanning stretches (helical) occupy residues 174–194, 205–225, 263–283, and 303–323; these read LTAD…SLMV, FGIM…SYVN, LFVM…PLWV, and VFNL…YLIV. Residues 324–384 lie on the Cytoplasmic side of the membrane; sequence KIACKTVSKG…LLTGPCSVDD (61 aa). A disordered region spans residues 335–384; sequence VSKDDRSDIESSSDDEDSEPPGKKPHSSTTTNGTSGTNGYLLTGPCSVDD. A compositionally biased stretch (low complexity) spans 361-373; sequence SSTTTNGTSGTNG.

N-glycosylated. Glycosylation on Asn-18 is not necessary for function. In terms of processing, acetylated. Deacetylation by SIRT3 increases enzyme activity and promotes mitochondrial ceramide accumulation. Post-translationally, phosphorylated at the C-terminus by CK2. As to expression, broadly expressed, with highest levels in kidney and brain (at protein level).

It is found in the endoplasmic reticulum membrane. The catalysed reaction is a sphingoid base + hexadecanoyl-CoA = an N-hexadecanoyl-sphingoid base + CoA + H(+). It catalyses the reaction sphinganine + hexadecanoyl-CoA = N-hexadecanoylsphinganine + CoA + H(+). It carries out the reaction hexadecasphinganine + hexadecanoyl-CoA = N-hexadecanoylhexadecasphinganine + CoA + H(+). The enzyme catalyses sphing-4-enine + hexadecanoyl-CoA = N-hexadecanoylsphing-4-enine + CoA + H(+). The catalysed reaction is sphinganine + tetradecanoyl-CoA = N-(tetradecanoyl)-sphinganine + CoA + H(+). It catalyses the reaction sphinganine + octadecanoyl-CoA = N-(octadecanoyl)-sphinganine + CoA + H(+). The protein operates within lipid metabolism; sphingolipid metabolism. In terms of biological role, ceramide synthase that catalyzes the transfer of the acyl chain from acyl-CoA to a sphingoid base, with high selectivity toward palmitoyl-CoA (hexadecanoyl-CoA; C16:0-CoA). Can use other acyl donors, but with less efficiency. N-acylates sphinganine and sphingosine bases to form dihydroceramides and ceramides in de novo synthesis and salvage pathways, respectively. Ceramides generated by CERS6 play a role in inflammatory response. Acts as a regulator of metabolism and hepatic lipid accumulation. Under high fat diet, palmitoyl- (C16:0-) ceramides generated by CERS6 specifically bind the mitochondrial fission factor MFF, thereby promoting mitochondrial fragmentation and contributing to the development of obesity. The chain is Ceramide synthase 6 from Mus musculus (Mouse).